Consider the following 105-residue polypeptide: Putative pterin-4-alpha-carbinolamine dehydratase (105 aa).

Belongs to the pterin-4-alpha-carbinolamine dehydratase family.

It carries out the reaction (4aS,6R)-4a-hydroxy-L-erythro-5,6,7,8-tetrahydrobiopterin = (6R)-L-erythro-6,7-dihydrobiopterin + H2O. This is Putative pterin-4-alpha-carbinolamine dehydratase from Sinorhizobium fredii (strain NBRC 101917 / NGR234).